The primary structure comprises 281 residues: Pantothenate synthetase (281 aa).

31-38 (MGNLHAGH) lines the ATP pocket. Catalysis depends on His38, which acts as the Proton donor. Gln62 lines the (R)-pantoate pocket. A beta-alanine-binding site is contributed by Gln62. Residue 150-153 (GKKD) coordinates ATP. Gln156 contributes to the (R)-pantoate binding site. Residues Val179 and 187-190 (MSSR) each bind ATP.

It belongs to the pantothenate synthetase family. In terms of assembly, homodimer.

The protein resides in the cytoplasm. The catalysed reaction is (R)-pantoate + beta-alanine + ATP = (R)-pantothenate + AMP + diphosphate + H(+). Its pathway is cofactor biosynthesis; (R)-pantothenate biosynthesis; (R)-pantothenate from (R)-pantoate and beta-alanine: step 1/1. Catalyzes the condensation of pantoate with beta-alanine in an ATP-dependent reaction via a pantoyl-adenylate intermediate. The protein is Pantothenate synthetase of Xylella fastidiosa (strain M23).